The following is a 440-amino-acid chain: Platelet-activating factor acetylhydrolase (440 aa).

Residues 1–21 (MVPLKLQALFCLLCCLPWVHP) form the signal peptide. N-linked (GlcNAc...) asparagine glycans are attached at residues N59, N75, and N199. The active-site Nucleophile is S272. Catalysis depends on charge relay system residues D295 and H350.

This sequence belongs to the AB hydrolase superfamily. Lipase family. N-glycosylated. As to expression, plasma.

It is found in the secreted. The protein localises to the extracellular space. It catalyses the reaction a 1-O-alkyl-2-acetyl-sn-glycero-3-phosphocholine + H2O = a 1-O-alkyl-sn-glycero-3-phosphocholine + acetate + H(+). The enzyme catalyses 1-O-decyl-2-acetyl-sn-glycero-3-phosphocholine + H2O = 1-O-decyl-sn-glycero-3-phosphocholine + acetate + H(+). It carries out the reaction 1-O-dodecyl-2-acetyl-sn-glycero-3-phosphocholine + H2O = 1-O-dodecyl-sn-glycero-3-phosphocholine + acetate + H(+). The catalysed reaction is 1-O-tetradecyl-2-acetyl-sn-glycero-3-phosphocholine + H2O = 1-O-tetradecyl-sn-glycero-3-phosphocholine + acetate + H(+). It catalyses the reaction 1-O-hexadecyl-2-acetyl-sn-glycero-3-phosphocholine + H2O = 1-O-hexadecyl-sn-glycero-3-phosphocholine + acetate + H(+). The enzyme catalyses 1-O-octadecyl-2-acetyl-sn-glycero-3-phosphocholine + H2O = 1-O-octadecyl-sn-glycero-3-phosphocholine + acetate + H(+). It carries out the reaction 1-hexadecanoyl-2-acetyl-sn-glycero-3-phosphocholine + H2O = 1-hexadecanoyl-sn-glycero-3-phosphocholine + acetate + H(+). The catalysed reaction is 1-hexadecanoyl-2-propionyl-sn-glycero-3-phosphocholine + H2O = propanoate + 1-hexadecanoyl-sn-glycero-3-phosphocholine + H(+). It catalyses the reaction 1-hexadecanoyl-2-butanoyl-sn-glycero-3-phosphocholine + H2O = butanoate + 1-hexadecanoyl-sn-glycero-3-phosphocholine + H(+). The enzyme catalyses 1-hexadecanoyl-2-pentanoyl-sn-glycero-3-phosphocholine + H2O = pentanoate + 1-hexadecanoyl-sn-glycero-3-phosphocholine + H(+). It carries out the reaction 1-hexadecanoyl-2-glutaroyl-sn-glycero-3-phosphocholine + H2O = glutarate + 1-hexadecanoyl-sn-glycero-3-phosphocholine + H(+). The catalysed reaction is 1-hexadecanoyl-2-(5-oxopentanoyl)-sn-glycero-3-phosphocholine + H2O = 5-oxopentanoate + 1-hexadecanoyl-sn-glycero-3-phosphocholine + H(+). It catalyses the reaction 1-hexadecanoyl-2-(9-oxononanoyl)-sn-glycero-3-phosphocholine + H2O = 9-oxononanoate + 1-hexadecanoyl-sn-glycero-3-phosphocholine + H(+). The enzyme catalyses 1-hexadecanoyl-2-[9-hydroperoxy-(10E-octadecenoyl)]-sn-glycero-3-phosphocholine + H2O = 9-hydroperoxy-10E-octadecenoate + 1-hexadecanoyl-sn-glycero-3-phosphocholine + H(+). It carries out the reaction 1-hexadecanoyl-2-(10-hydroperoxy-8E-octadecenoyl)-sn-glycero-3-phosphocholine + H2O = 10-hydroperoxy-(8E)-octadecenoate + 1-hexadecanoyl-sn-glycero-3-phosphocholine + H(+). Lipoprotein-associated calcium-independent phospholipase A2 involved in phospholipid catabolism during inflammatory and oxidative stress response. At the lipid-aqueous interface, hydrolyzes the ester bond of fatty acyl group attached at sn-2 position of phospholipids (phospholipase A2 activity). Specifically targets phospholipids with a short-chain fatty acyl group at sn-2 position. Can hydrolyze phospholipids with long fatty acyl chains, only if they carry oxidized functional groups. Hydrolyzes and inactivates platelet-activating factor (PAF, 1-O-alkyl-2-acetyl-sn-glycero-3-phosphocholine), a potent pro-inflammatory signaling lipid that acts through PTAFR on various innate immune cells. Hydrolyzes oxidatively truncated phospholipids carrying an aldehyde group at omega position, preventing their accumulation in lipoprotein particles and uncontrolled pro-inflammatory effects. As part of high-density lipoprotein (HDL) particles, can hydrolyze phospholipids having long-chain fatty acyl hydroperoxides at sn-2 position and protect against potential accumulation of these oxylipins in the vascular wall. Catalyzes the release from membrane phospholipids of F2-isoprostanes, lipid biomarkers of cellular oxidative damage. The sequence is that of Platelet-activating factor acetylhydrolase (Pla2g7) from Mus musculus (Mouse).